The chain runs to 170 residues: Adenine phosphoribosyltransferase (170 aa).

Belongs to the purine/pyrimidine phosphoribosyltransferase family. As to quaternary structure, homodimer.

The protein localises to the cytoplasm. The catalysed reaction is AMP + diphosphate = 5-phospho-alpha-D-ribose 1-diphosphate + adenine. It participates in purine metabolism; AMP biosynthesis via salvage pathway; AMP from adenine: step 1/1. Its function is as follows. Catalyzes a salvage reaction resulting in the formation of AMP, that is energically less costly than de novo synthesis. This chain is Adenine phosphoribosyltransferase, found in Brachyspira hyodysenteriae (strain ATCC 49526 / WA1).